Here is a 217-residue protein sequence, read N- to C-terminus: Homeobox protein Hox-B7 (217 aa).

The Antp-type hexapeptide motif lies at I126–R131. Residues R137–N196 constitute a DNA-binding region (homeobox). The disordered stretch occupies residues K194 to E217.

Belongs to the Antp homeobox family. Forms a DNA-binding heterodimer with transcription factor PBX1.

The protein resides in the nucleus. Sequence-specific transcription factor which is part of a developmental regulatory system that provides cells with specific positional identities on the anterior-posterior axis. In Homo sapiens (Human), this protein is Homeobox protein Hox-B7 (HOXB7).